We begin with the raw amino-acid sequence, 424 residues long: Gamma-glutamyl phosphate reductase (424 aa).

This sequence belongs to the gamma-glutamyl phosphate reductase family.

It localises to the cytoplasm. It carries out the reaction L-glutamate 5-semialdehyde + phosphate + NADP(+) = L-glutamyl 5-phosphate + NADPH + H(+). The protein operates within amino-acid biosynthesis; L-proline biosynthesis; L-glutamate 5-semialdehyde from L-glutamate: step 2/2. Functionally, catalyzes the NADPH-dependent reduction of L-glutamate 5-phosphate into L-glutamate 5-semialdehyde and phosphate. The product spontaneously undergoes cyclization to form 1-pyrroline-5-carboxylate. In Dehalococcoides mccartyi (strain ATCC BAA-2100 / JCM 16839 / KCTC 5957 / BAV1), this protein is Gamma-glutamyl phosphate reductase.